The chain runs to 925 residues: Probable replication restart protein PriA (925 aa).

Positions 645, 648, 654, 657, 672, 675, 685, and 688 each coordinate Zn(2+).

This sequence belongs to the helicase family. PriA subfamily. In terms of assembly, interacts with DnaB (DR_0549). Component of the replication restart primosome. It depends on Zn(2+) as a cofactor.

Initiates the restart of stalled replication forks, which reloads the replicative helicase on sites other than the origin of replication. Recognizes abandoned replication forks and remodels them to uncover a helicase loading site. Promotes assembly of the primosome at these replication forks. Recognizes and binds DNA at stalled replication forks, also binds single-stranded (ss)DNA. The polypeptide is Probable replication restart protein PriA (Deinococcus radiodurans (strain ATCC 13939 / DSM 20539 / JCM 16871 / CCUG 27074 / LMG 4051 / NBRC 15346 / NCIMB 9279 / VKM B-1422 / R1)).